The following is a 234-amino-acid chain: tRNA (guanine-N(1)-)-methyltransferase (234 aa).

Residues Gly-110 and 134-139 (IGDYVL) each bind S-adenosyl-L-methionine.

It belongs to the RNA methyltransferase TrmD family. Homodimer.

It localises to the cytoplasm. The catalysed reaction is guanosine(37) in tRNA + S-adenosyl-L-methionine = N(1)-methylguanosine(37) in tRNA + S-adenosyl-L-homocysteine + H(+). Functionally, specifically methylates guanosine-37 in various tRNAs. The chain is tRNA (guanine-N(1)-)-methyltransferase from Tropheryma whipplei (strain Twist) (Whipple's bacillus).